Reading from the N-terminus, the 345-residue chain is NADH-ubiquinone oxidoreductase chain 2 (345 aa).

A run of 10 helical transmembrane segments spans residues 1 to 21, 25 to 45, 56 to 76, 92 to 114, 149 to 171, 178 to 198, 200 to 220, 241 to 261, 274 to 294, and 324 to 344; these read MNPI…VITM, NLML…PMLI, ATKY…AIVL, GLIL…FHFW, LNST…GGLN, IMAY…PYNP, LTLL…MALM, LTMI…TGFL, NCLI…FFYT, and LMFS…PQLI.

This sequence belongs to the complex I subunit 2 family. In terms of assembly, core subunit of respiratory chain NADH dehydrogenase (Complex I) which is composed of 45 different subunits. Interacts with TMEM242.

It localises to the mitochondrion inner membrane. It catalyses the reaction a ubiquinone + NADH + 5 H(+)(in) = a ubiquinol + NAD(+) + 4 H(+)(out). In terms of biological role, core subunit of the mitochondrial membrane respiratory chain NADH dehydrogenase (Complex I) which catalyzes electron transfer from NADH through the respiratory chain, using ubiquinone as an electron acceptor. Essential for the catalytic activity and assembly of complex I. The protein is NADH-ubiquinone oxidoreductase chain 2 of Mus musculus (Mouse).